The following is a 118-amino-acid chain: Large ribosomal subunit protein uL18 (118 aa).

This sequence belongs to the universal ribosomal protein uL18 family. In terms of assembly, part of the 50S ribosomal subunit; part of the 5S rRNA/L5/L18/L25 subcomplex. Contacts the 5S and 23S rRNAs.

Functionally, this is one of the proteins that bind and probably mediate the attachment of the 5S RNA into the large ribosomal subunit, where it forms part of the central protuberance. In Campylobacter lari (strain RM2100 / D67 / ATCC BAA-1060), this protein is Large ribosomal subunit protein uL18.